A 389-amino-acid polypeptide reads, in one-letter code: Na(+)/H(+) antiporter NhaA 1 (389 aa).

A run of 11 helical transmembrane segments spans residues 12–32 (VLNEAFGGVLLIVCTLLALLV), 62–82 (FLLWINDGLISIFFFAIGLEL), 97–117 (IVLPFMAALGGILIPAMLFAL), 128–148 (GWAIPTATDTAFALAILMMCG), 157–177 (IFLLSLAIFDDVGAILIIAIF), 184–204 (IAAFVIAGLAILVMLILNLLG), 220–240 (ISVLKSGVHATLAGIVTAFFI), 260–280 (FWIAFIILPLFAFANAGVNLS), 282–302 (IDIGAIFSGVSIGIFLGLFVG), 331–351 (LYGVCILTGIGFTMSLFIDGL), and 365–385 (LAILIASFCSGIWGFIYLKFF).

It belongs to the NhaA Na(+)/H(+) (TC 2.A.33) antiporter family.

It localises to the cell inner membrane. It carries out the reaction Na(+)(in) + 2 H(+)(out) = Na(+)(out) + 2 H(+)(in). Functionally, na(+)/H(+) antiporter that extrudes sodium in exchange for external protons. This Campylobacter jejuni subsp. jejuni serotype O:2 (strain ATCC 700819 / NCTC 11168) protein is Na(+)/H(+) antiporter NhaA 1.